A 1730-amino-acid polypeptide reads, in one-letter code: Meiosis regulator and mRNA stability factor 1 (1730 aa).

S65 is subject to Phosphoserine. The 138-residue stretch at I352–I489 folds into the NYN domain. A compositionally biased stretch (basic and acidic residues) spans M655–Q668. Residues M655 to R722 form a disordered region. A Phosphotyrosine modification is found at Y698. One can recognise an RRM domain in the interval V781–G860. 2 HTH OST-type domains span residues S865 to G939 and S993 to P1069. S1081 and S1083 each carry phosphoserine. HTH OST-type domains are found at residues Q1089–R1163, Q1165–E1241, R1249–E1324, R1325–K1400, S1401–T1475, and S1476–D1550. The interval V1667–N1714 is disordered. A Phosphoserine modification is found at S1684.

Interacts with LIMK2. In terms of tissue distribution, predominantly present in oocytes and barely detectable in granulosa cells (at protein level).

The protein resides in the peroxisome. In terms of biological role, essential regulator of oogenesis required for female meiotic progression to repress transposable elements and preventing their mobilization, which is essential for the germline integrity. Probably acts via some RNA metabolic process, equivalent to the piRNA system in males, which mediates the repression of transposable elements during meiosis by forming complexes composed of RNAs and governs the methylation and subsequent repression of transposons. Also required to protect from DNA double-strand breaks. The protein is Meiosis regulator and mRNA stability factor 1 (Marf1) of Mus musculus (Mouse).